Consider the following 174-residue polypeptide: NADH-ubiquinone oxidoreductase chain 6 (174 aa).

A run of 4 helical transmembrane segments spans residues 24 to 44 (LALG…SGLM), 53 to 73 (ILFL…TSLA), 82 to 102 (IKLT…SMIL), and 143 to 163 (FVTI…VKIT).

It belongs to the complex I subunit 6 family.

It is found in the mitochondrion membrane. The enzyme catalyses a ubiquinone + NADH + 5 H(+)(in) = a ubiquinol + NAD(+) + 4 H(+)(out). Core subunit of the mitochondrial membrane respiratory chain NADH dehydrogenase (Complex I) that is believed to belong to the minimal assembly required for catalysis. Complex I functions in the transfer of electrons from NADH to the respiratory chain. The immediate electron acceptor for the enzyme is believed to be ubiquinone. The protein is NADH-ubiquinone oxidoreductase chain 6 (mt:ND6) of Drosophila yakuba (Fruit fly).